A 461-amino-acid chain; its full sequence is tRNA-2-methylthio-N(6)-dimethylallyladenosine synthase (461 aa).

An MTTase N-terminal domain is found at 18–134 (KHIYIQTLGC…LPDFISRIEK (117 aa)). [4Fe-4S] cluster contacts are provided by C27, C63, C97, C172, C176, and C179. Residues 158-388 (CNGQVSSFVT…QALQEQHTLE (231 aa)) enclose the Radical SAM core domain. Residues 391–454 (KAMEGKQEDV…LHSLRGEMLC (64 aa)) form the TRAM domain.

The protein belongs to the methylthiotransferase family. MiaB subfamily. In terms of assembly, monomer. [4Fe-4S] cluster serves as cofactor.

The protein localises to the cytoplasm. The catalysed reaction is N(6)-dimethylallyladenosine(37) in tRNA + (sulfur carrier)-SH + AH2 + 2 S-adenosyl-L-methionine = 2-methylsulfanyl-N(6)-dimethylallyladenosine(37) in tRNA + (sulfur carrier)-H + 5'-deoxyadenosine + L-methionine + A + S-adenosyl-L-homocysteine + 2 H(+). Its function is as follows. Catalyzes the methylthiolation of N6-(dimethylallyl)adenosine (i(6)A), leading to the formation of 2-methylthio-N6-(dimethylallyl)adenosine (ms(2)i(6)A) at position 37 in tRNAs that read codons beginning with uridine. The chain is tRNA-2-methylthio-N(6)-dimethylallyladenosine synthase from Syntrophus aciditrophicus (strain SB).